We begin with the raw amino-acid sequence, 114 residues long: Notch-regulated ankyrin repeat-containing protein (114 aa).

ANK repeat units follow at residues Glu-50–Leu-79 and Asp-83–Ser-112.

This sequence belongs to the NRARP family. Interacts with LEF1.

Functionally, downstream effector of Notch signaling. Involved in the regulation of liver cancer cells self-renewal. Involved in angiogenesis acting downstream of Notch at branch points to regulate vascular density. Proposed to integrate endothelial Notch and Wnt signaling to control stalk cell proliferation and to stablilize new endothelial connections during angiogenesis. During somitogenesis involved in maintenance of proper somite segmentation and proper numbers of somites and vertebrae. Required for proper anterior-posterior somite patterning. Proposed to function in a negative feedback loop to destabilize Notch 1 intracellular domain (NICD) and down-regulate the Notch signal, preventing expansion of the Notch signal into the anterior somite domain. The polypeptide is Notch-regulated ankyrin repeat-containing protein (NRARP) (Homo sapiens (Human)).